Reading from the N-terminus, the 496-residue chain is UDP-N-acetylmuramoylalanine--D-glutamate ligase (496 aa).

Residue 130–136 participates in ATP binding; that stretch reads GTNGKTT.

This sequence belongs to the MurCDEF family.

It localises to the cytoplasm. The catalysed reaction is UDP-N-acetyl-alpha-D-muramoyl-L-alanine + D-glutamate + ATP = UDP-N-acetyl-alpha-D-muramoyl-L-alanyl-D-glutamate + ADP + phosphate + H(+). It participates in cell wall biogenesis; peptidoglycan biosynthesis. Cell wall formation. Catalyzes the addition of glutamate to the nucleotide precursor UDP-N-acetylmuramoyl-L-alanine (UMA). The protein is UDP-N-acetylmuramoylalanine--D-glutamate ligase of Mycobacterium bovis (strain ATCC BAA-935 / AF2122/97).